The sequence spans 278 residues: Bifunctional protein FolD (278 aa).

NADP(+) contacts are provided by residues Gly165–Ser167, Ser190, and Thr231.

It belongs to the tetrahydrofolate dehydrogenase/cyclohydrolase family. In terms of assembly, homodimer.

It carries out the reaction (6R)-5,10-methylene-5,6,7,8-tetrahydrofolate + NADP(+) = (6R)-5,10-methenyltetrahydrofolate + NADPH. The enzyme catalyses (6R)-5,10-methenyltetrahydrofolate + H2O = (6R)-10-formyltetrahydrofolate + H(+). It functions in the pathway one-carbon metabolism; tetrahydrofolate interconversion. In terms of biological role, catalyzes the oxidation of 5,10-methylenetetrahydrofolate to 5,10-methenyltetrahydrofolate and then the hydrolysis of 5,10-methenyltetrahydrofolate to 10-formyltetrahydrofolate. The protein is Bifunctional protein FolD of Clostridium acetobutylicum (strain ATCC 824 / DSM 792 / JCM 1419 / IAM 19013 / LMG 5710 / NBRC 13948 / NRRL B-527 / VKM B-1787 / 2291 / W).